The sequence spans 323 residues: Beta-ketoacyl-[acyl-carrier-protein] synthase III (323 aa).

Residues Cys-113 and His-250 contribute to the active site. The ACP-binding stretch occupies residues 251-255 (QANRR). Asn-280 is an active-site residue.

It belongs to the thiolase-like superfamily. FabH family. In terms of assembly, homodimer.

It is found in the cytoplasm. It catalyses the reaction malonyl-[ACP] + acetyl-CoA + H(+) = 3-oxobutanoyl-[ACP] + CO2 + CoA. It participates in lipid metabolism; fatty acid biosynthesis. Catalyzes the condensation reaction of fatty acid synthesis by the addition to an acyl acceptor of two carbons from malonyl-ACP. Catalyzes the first condensation reaction which initiates fatty acid synthesis and may therefore play a role in governing the total rate of fatty acid production. Possesses both acetoacetyl-ACP synthase and acetyl transacylase activities. Its substrate specificity determines the biosynthesis of branched-chain and/or straight-chain of fatty acids. The protein is Beta-ketoacyl-[acyl-carrier-protein] synthase III of Rhizobium meliloti (strain 1021) (Ensifer meliloti).